The sequence spans 144 residues: Small ribosomal subunit protein bS6 (144 aa).

The segment at 99-144 is disordered; that stretch reads KASPLAPCEEKGEEGKAEDAADELTTFGMADDDDLGDDDDTVEAGI. A compositionally biased stretch (basic and acidic residues) spans 106–117; the sequence is CEEKGEEGKAED. Positions 128–144 are enriched in acidic residues; the sequence is ADDDDLGDDDDTVEAGI.

The protein belongs to the bacterial ribosomal protein bS6 family.

Its function is as follows. Binds together with bS18 to 16S ribosomal RNA. This chain is Small ribosomal subunit protein bS6, found in Magnetococcus marinus (strain ATCC BAA-1437 / JCM 17883 / MC-1).